Reading from the N-terminus, the 239-residue chain is Tumor necrosis factor ligand superfamily member 8 (239 aa).

The segment at 1 to 36 (MEPGLQQAGSCGAPSPDPAMQVQPGSVASPWRSTRP) is disordered. At 1–43 (MEPGLQQAGSCGAPSPDPAMQVQPGSVASPWRSTRPWRSTSRS) the chain is on the cytoplasmic side. A helical; Signal-anchor for type II membrane protein transmembrane segment spans residues 44-67 (YFYLSTTALVCLVVAVAIILVLVV). Residues 68–239 (QKKDSTPNTT…LSVFLYSSSD (172 aa)) lie on the Extracellular side of the membrane. Asn75, Asn86, Asn114, Asn158, Asn194, and Asn206 each carry an N-linked (GlcNAc...) asparagine glycan. A THD domain is found at 103–230 (SWAYLQVSKH…TNTFPLDNVL (128 aa)). A disulfide bridge connects residues Cys156 and Cys182.

The protein belongs to the tumor necrosis factor family. Homotrimer.

Its subcellular location is the membrane. Cytokine that binds to TNFRSF8/CD30. Induces proliferation of T-cells. The protein is Tumor necrosis factor ligand superfamily member 8 (Tnfsf8) of Mus musculus (Mouse).